The chain runs to 290 residues: Malonyl-[acyl-carrier protein] O-methyltransferase (290 aa).

Belongs to the methyltransferase superfamily.

It catalyses the reaction malonyl-[ACP] + S-adenosyl-L-methionine = malonyl-[ACP] methyl ester + S-adenosyl-L-homocysteine. It functions in the pathway cofactor biosynthesis; biotin biosynthesis. Converts the free carboxyl group of a malonyl-thioester to its methyl ester by transfer of a methyl group from S-adenosyl-L-methionine (SAM). It allows to synthesize pimeloyl-ACP via the fatty acid synthetic pathway. This Gallionella capsiferriformans (strain ES-2) (Gallionella ferruginea capsiferriformans (strain ES-2)) protein is Malonyl-[acyl-carrier protein] O-methyltransferase.